We begin with the raw amino-acid sequence, 86 residues long: Small ribosomal subunit protein uS17 (86 aa).

The protein belongs to the universal ribosomal protein uS17 family. In terms of assembly, part of the 30S ribosomal subunit.

In terms of biological role, one of the primary rRNA binding proteins, it binds specifically to the 5'-end of 16S ribosomal RNA. This chain is Small ribosomal subunit protein uS17, found in Shouchella clausii (strain KSM-K16) (Alkalihalobacillus clausii).